The chain runs to 525 residues: Putative ankyrin repeat protein FPV228 (525 aa).

ANK repeat units follow at residues 39–71 (HPDNPLLEAVKLTNTDMIKTLLDYGICINTRDI), 72–122 (LGNT…ACNN), 123–152 (LNQTPLHLAAESNNTTLLKILLYNNAKVNI), 156–185 (YGNTCLHYAVRGRNIESIKLLLSYNVDVNI), 190–226 (YWYSALHEAVQIGDSKISRCIVSLLLCNKANVNTRCR), 227–254 (LNTTPIFYAINCIDTLKLLLENGADINA), 258–287 (NDNAVIHLATENRRYDIIKTLLDYGADVNM), 291–320 (RGKTPLYYATENYSYRNMKLLLDHGSNPNI), and 324–353 (IMNTPLFISIKCTCIENTKMLLDSGADINH).

This chain is Putative ankyrin repeat protein FPV228, found in Fowlpox virus (strain NVSL) (FPV).